The primary structure comprises 460 residues: UDP-glycosyltransferase 74B1 (460 aa).

H22 functions as the Proton acceptor in the catalytic mechanism. H22 serves as a coordination point for an anthocyanidin. The active-site Charge relay is the D113. T135, Q339, H354, W357, N358, S359, E362, D378, and Q379 together coordinate UDP-alpha-D-glucose.

The protein belongs to the UDP-glycosyltransferase family. In terms of tissue distribution, expressed in the vasculature, the apical meristems of roots, shoots and inflorescence, and the junction of organ or branches.

The enzyme catalyses (Z)-2-phenyl-1-thioacetohydroximate + UDP-alpha-D-glucose = (Z)-desulfoglucotropeolin + UDP. The catalysed reaction is a (Z)-omega-(methylsulfanyl)alkyl-thiohydroximate + UDP-alpha-D-glucose = an aliphatic (Z)-desulfo-glucosinolate + UDP. It catalyses the reaction (Z)-2-(indol-3-yl)-1-thioacetohydroximate + UDP-alpha-D-glucose = (Z)-indolylmethyl desulfoglucosinolate + UDP. Involved in the biosynthesis of glucosinolate. In in vitro assay, may use phenylacetothiohydroximate (PATH), but not phenylacetic acid (PAA), indole-3-acetic acid (IAA) or salicylic acid (SA) as substrate. Specific for the thiohydroximate functional group and does not glucosylate the carboxylate group or a hydroxyl group. The protein is UDP-glycosyltransferase 74B1 (UGT74B1) of Arabidopsis thaliana (Mouse-ear cress).